The following is a 369-amino-acid chain: Nuclear hormone receptor family member nhr-64 (369 aa).

A DNA-binding region (nuclear receptor) is located at residues 67-142; it reads EKCQVDKAKR…ASTRGLRTTV (76 aa). 2 NR C4-type zinc fingers span residues 70–90 and 106–130; these read QVDK…CLRK and PANP…TLIR. One can recognise an NR LBD domain in the interval 120-352; it reads PDDPLLDTLI…NLMLELMLPN (233 aa).

It belongs to the nuclear hormone receptor family.

The protein localises to the nucleus. Its function is as follows. Orphan nuclear receptor. The sequence is that of Nuclear hormone receptor family member nhr-64 (nhr-64) from Caenorhabditis elegans.